We begin with the raw amino-acid sequence, 828 residues long: Periplasmic nitrate reductase (828 aa).

A signal peptide (tat-type signal) is located at residues 1–31 (MKLSRRSFMKANAVAAAAAAAGLSVPGVARA). The region spanning 39–95 (IKWDKAPCRFCGTGCGVLVGTQQGRVVACQGDPDAPVNRGLNCIKGYFLPKIMYGKD) is the 4Fe-4S Mo/W bis-MGD-type domain. Residues Cys46, Cys49, Cys53, and Cys81 each coordinate [4Fe-4S] cluster. Residues Lys83, Gln150, Asn175, Cys179, 212 to 219 (WGANMAEM), 243 to 247 (STYQH), 262 to 264 (QSD), Met372, Gln376, Asn482, 508 to 509 (SD), Lys531, Asp558, and 718 to 727 (TGRVLEHWHT) contribute to the Mo-bis(molybdopterin guanine dinucleotide) site. Phe794 lines the substrate pocket. Residues Asn802 and Lys819 each coordinate Mo-bis(molybdopterin guanine dinucleotide).

It belongs to the prokaryotic molybdopterin-containing oxidoreductase family. NasA/NapA/NarB subfamily. Component of the periplasmic nitrate reductase NapAB complex composed of NapA and NapB. [4Fe-4S] cluster is required as a cofactor. Requires Mo-bis(molybdopterin guanine dinucleotide) as cofactor. Post-translationally, predicted to be exported by the Tat system. The position of the signal peptide cleavage has not been experimentally proven.

The protein localises to the periplasm. It catalyses the reaction 2 Fe(II)-[cytochrome] + nitrate + 2 H(+) = 2 Fe(III)-[cytochrome] + nitrite + H2O. Catalytic subunit of the periplasmic nitrate reductase complex NapAB. Receives electrons from NapB and catalyzes the reduction of nitrate to nitrite. The protein is Periplasmic nitrate reductase of Escherichia coli O8 (strain IAI1).